The chain runs to 143 residues: MRIEAVVEVRFTEDRGKVLKALQNVFTPVSIEEKPSESGVLIVATCEGYTCLEKLRSAIWRQGIQDAARNVISKGIVSENTIIFSVNKQAAYVGVVSFVTETNESPLGPITFTVKTNNVRQFLDWLAPRTYRGRVYYEAPPPD.

This sequence belongs to the UPF0201 family.

The sequence is that of UPF0201 protein Pisl_1658 from Pyrobaculum islandicum (strain DSM 4184 / JCM 9189 / GEO3).